The chain runs to 108 residues: Tetrahydromethanopterin S-methyltransferase subunit B (108 aa).

The helical transmembrane segment at 81–101 (FFGFWISLSILTLGLILVIGL) threads the bilayer.

The protein belongs to the MtrB family. The complex is composed of 8 subunits; MtrA, MtrB, MtrC, MtrD, MtrE, MtrF, MtrG and MtrH.

Its subcellular location is the cell membrane. It catalyses the reaction 5-methyl-5,6,7,8-tetrahydromethanopterin + coenzyme M + 2 Na(+)(in) = 5,6,7,8-tetrahydromethanopterin + methyl-coenzyme M + 2 Na(+)(out). It functions in the pathway one-carbon metabolism; methanogenesis from CO(2); methyl-coenzyme M from 5,10-methylene-5,6,7,8-tetrahydromethanopterin: step 2/2. Part of a complex that catalyzes the formation of methyl-coenzyme M and tetrahydromethanopterin from coenzyme M and methyl-tetrahydromethanopterin. This is an energy-conserving, sodium-ion translocating step. In Methanococcus aeolicus (strain ATCC BAA-1280 / DSM 17508 / OCM 812 / Nankai-3), this protein is Tetrahydromethanopterin S-methyltransferase subunit B.